Here is a 586-residue protein sequence, read N- to C-terminus: Cytosolic Fe-S cluster assembly factor NAR1 (586 aa).

[4Fe-4S] cluster contacts are provided by C20, C73, C76, C79, C220, C275, C462, and C466.

The protein belongs to the NARF family.

Functionally, component of the cytosolic Fe/S protein assembly machinery. Required for maturation of extramitochondrial Fe/S proteins. May play a role in the transfer of pre-assembled Fe/S clusters to target apoproteins. This Chaetomium globosum (strain ATCC 6205 / CBS 148.51 / DSM 1962 / NBRC 6347 / NRRL 1970) (Soil fungus) protein is Cytosolic Fe-S cluster assembly factor NAR1 (NAR1).